A 264-amino-acid chain; its full sequence is Virulence plasmid protein pGP3-D (264 aa).

The polypeptide is Virulence plasmid protein pGP3-D (Chlamydia trachomatis serovar L2 (strain ATCC VR-902B / DSM 19102 / 434/Bu)).